The following is a 358-amino-acid chain: Peptide chain release factor 1 (358 aa).

Glutamine 236 bears the N5-methylglutamine mark.

The protein belongs to the prokaryotic/mitochondrial release factor family. In terms of processing, methylated by PrmC. Methylation increases the termination efficiency of RF1.

It is found in the cytoplasm. In terms of biological role, peptide chain release factor 1 directs the termination of translation in response to the peptide chain termination codons UAG and UAA. This is Peptide chain release factor 1 from Corynebacterium efficiens (strain DSM 44549 / YS-314 / AJ 12310 / JCM 11189 / NBRC 100395).